The primary structure comprises 835 residues: Beta-galactosidase (835 aa).

The signal sequence occupies residues 1-22; the sequence is MGFWMAMLLMLLLCLWVSCGIA. Residue E180 is the Proton donor of the active site. E249 functions as the Nucleophile in the catalytic mechanism. An SUEL-type lectin domain is found at 749–835; the sequence is RPLRPKAHLK…KKLSVEAICS (87 aa).

The protein belongs to the glycosyl hydrolase 35 family.

The enzyme catalyses Hydrolysis of terminal non-reducing beta-D-galactose residues in beta-D-galactosides.. Functionally, involved in cell wall degradation. Degrades polysaccharides containing beta-(1--&gt;4)-linked galactans, acting as an exo-(1--&gt;4)-beta-D-galactanase. The polypeptide is Beta-galactosidase (Solanum lycopersicum (Tomato)).